The chain runs to 210 residues: HTH-type transcriptional repressor ComR (210 aa).

In terms of domain architecture, HTH tetR-type spans 18 to 78 (VFDRDAALDK…AVLDRYIDRF (61 aa)). Residues 41–60 (SLADLVEATGAKAPTLYAEF) constitute a DNA-binding region (H-T-H motif).

Its activity is regulated as follows. Binding to the promoter region of BhsA/ComC is released in the presence of copper. In terms of biological role, represses expression of BhsA/ComC by binding to its promoter region in the absence of copper. This Escherichia coli (strain K12) protein is HTH-type transcriptional repressor ComR (comR).